A 945-amino-acid chain; its full sequence is MAANGRASVRPVERHGAPPRPAGRSRSVAPPSRRPSPSPSRARPAAADNDGGSDSCRVRVAVRLRPKNSEDLAHGADFDSCVELQPECKKLKLKKNNWSCESYRFDEVFSENASQKRVYEVVAKPVVESVLEGYNGTVMAYGQTGTGKTYTVGRLGNDDPSEGGIMVRALEHILSVMSLETDSVAISFLQLYLESVQDLLAPEKTNIPIVEDPKTGEVSLPGAAKVEIRDLEHVFQLLQIGEMNRHAANTKMNTESSRSHAILIIHIQRSSRIEDGSNTSLPNGTDNLFPDNLPLVLKSKLLIVDLAGSERIDKSGSEGHMIEEAKFINLSLTSLGKCINALAENSPHIPTRDSKLTRILRDSFGGTARTSLIVTIGPSSRHFSETSSTIMFGQRAMKIVNTIRIKEEVDYESLYKKVEHEVDHLTSEMERQQKLKNSEKMQLEKKLKESEASLNDLKVTSNMQIENMAMEKRQLESTIKRLMLDLEKEKGKNNILSEQIIHLETSLDENKQKQLENISNTNILADTTKSHEKKIRELLKQLEDERSRSASMNDHLNVLQQQLSDAQNYFQKNIACELEKQLSRTTEEFASQISSLEERIADLISEKELVYEELKSTQEKMQQEMRHRQGLEDEILRLKQSLADNCSEESKALCGMVRSGSGLGSVPFMSKSGKSRELLSSQRSNISKIFEEVGLPNVLALLKSDELEVQIHAVKVVANLAAEDVNQEKIVEEGGLDALLSLLETSENTTIHRVTAGAIANLAMNGSNQGLIMNKGGARLLANIASKTNDPQTLRMVAGALANLCGNEKLHVMLKQDGGIKALLGMFRTGHNEVIAQIARGMANFAKCESRVISQGHRKGRSLLIEEGVLNWMVANSSAFSASTRRHIELAFCHLAQNEDNARDIILTGGIKELLRISRESSRDDTRNLAKKALNSNPAFFKEIQ.

The segment at 1–54 is disordered; sequence MAANGRASVRPVERHGAPPRPAGRSRSVAPPSRRPSPSPSRARPAAADNDGGSD. Over residues 22–31 the composition is skewed to low complexity; sequence AGRSRSVAPP. The region spanning 57-399 is the Kinesin motor domain; sequence RVRVAVRLRP…IMFGQRAMKI (343 aa). 142–149 lines the ATP pocket; the sequence is GQTGTGKT. The D-BOX motif lies at 369 to 377; that stretch reads RTSLIVTIG. Positions 415–644 form a coiled coil; sequence YKKVEHEVDH…ILRLKQSLAD (230 aa). ARM repeat units lie at residues 683 to 722, 724 to 764, 766 to 806, and 808 to 847; these read RSNISKIFEEVGLPNVLALLKSDELEVQIHAVKVVANLAA, DVNQ…NLAM, GSNQ…NLCG, and EKLHVMLKQDGGIKALLGMFRTGHNEVIAQIARGMANFAK.

The protein belongs to the TRAFAC class myosin-kinesin ATPase superfamily. Kinesin family. Ungrouped subfamily.

Its subcellular location is the cytoplasm. It localises to the cytoskeleton. This Oryza sativa subsp. japonica (Rice) protein is Kinesin-like protein KIN-UA.